The following is a 104-amino-acid chain: Glycine-rich protein (104 aa).

Positions 1 to 18 (MKSMIAAILFALVATSLA) are cleaved as a signal peptide.

This sequence belongs to the non-disulfide-bridged peptide (NDBP) superfamily. As to expression, expressed by the venom gland.

It is found in the secreted. The chain is Glycine-rich protein from Lychas mucronatus (Chinese swimming scorpion).